The following is a 328-amino-acid chain: tRNA uridine(34) hydroxylase (328 aa).

Residues 130-224 (LDEDTVVLDT…YGKDPEVQGE (95 aa)) enclose the Rhodanese domain. Cys-184 functions as the Cysteine persulfide intermediate in the catalytic mechanism.

It belongs to the TrhO family.

The enzyme catalyses uridine(34) in tRNA + AH2 + O2 = 5-hydroxyuridine(34) in tRNA + A + H2O. Catalyzes oxygen-dependent 5-hydroxyuridine (ho5U) modification at position 34 in tRNAs. This chain is tRNA uridine(34) hydroxylase, found in Streptococcus sanguinis (strain SK36).